The chain runs to 914 residues: MPELAKTYDPVGTEARWQQAWEDQGAFHPDPKAPGEPFSVVIPPPNVTGSLHMGHAFNTALIDTIVRYQRLAGKNVLCLPGTDHASIAVQTILEKQLKQEGKTRHHLGRDGFLERAWQWKAESGGRIVGQLRRLGYSVDWQRQRFTLDEGLSEAVKEAFVRLHEQGLIYRGEYLVNWCPASGSAVSDLEVEMKEVDGHLWHFRYPLSSGDGHLEVATTRPETMLGDTAVAVNPTDERYAHLVGQTLTLPFVGREIPIVADDHVEKDFGTGCVKVTPAHDPNDFAIGQRHGLPQITVMRKNGTMNKEAGQFEGLDRFEARKAVVAGLDELGLLVKVEDYRHSVPYSDRGKVPVEPLLSTQWFVRTEPLAARCREALEKQDPRFIPERWEKVYRDWLTDIRDWCISRQLWWGHRIPAWFVISETGGKYTDTTPYVVARNEVEALEKAKAKYGAAAVIEQDEDVLDTWFSSGLWPFSTLGWPDAESADLQRWYPTSTLVTGFDIIFFWVARMTMMAGAFTGEMPFQDVYIHGLVRDEQNRKMSKSAGNGIDPLLLIDRYGTDALRFALVREVAGAGQDIRLDYDRKTDTSATVEASRNFANKLWNATRFALMNLGDETPAQLGDPDPAALQLADRWILSRLARVNRETAERYSNYGLGEAAKGLYEFAWNDVCDWYLELSKRRLNPGENPSAEALADQRVAKQVLAKVISQMHQMLHPLMPHLTEELWHSVTGKSETTFLALQPWPALQESALDDALEASFADLIGAIRVVRNLRAVAGLKPSQSVPVRFVTGRGELAAVLNQGTADITALTRAESVAVMAPAEADAAPVAKALAGVSGELQVLLPIEGLVDLDALKGRLEKDIAKAEKEIKGLAGRLGNPNFADKAPPEVVAECQANLDEKQAQADLARKRLADLS.

A 'HIGH' region motif is present at residues 45-55 (PNVTGSLHMGH). The 'KMSKS' region motif lies at 538–542 (KMSKS). ATP is bound at residue lysine 541. Residues 847–914 (LVDLDALKGR…LARKRLADLS (68 aa)) are a coiled coil.

It belongs to the class-I aminoacyl-tRNA synthetase family. ValS type 1 subfamily. As to quaternary structure, monomer.

The protein localises to the cytoplasm. It carries out the reaction tRNA(Val) + L-valine + ATP = L-valyl-tRNA(Val) + AMP + diphosphate. In terms of biological role, catalyzes the attachment of valine to tRNA(Val). As ValRS can inadvertently accommodate and process structurally similar amino acids such as threonine, to avoid such errors, it has a 'posttransfer' editing activity that hydrolyzes mischarged Thr-tRNA(Val) in a tRNA-dependent manner. The chain is Valine--tRNA ligase from Parasynechococcus marenigrum (strain WH8102).